Reading from the N-terminus, the 346-residue chain is Fe(3+) ions import ATP-binding protein FbpC 2 (346 aa).

An ABC transporter domain is found at 2–234 (LELHRVSKSF…PNSEDIATFL (233 aa)). ATP is bound at residue 34-41 (GPSGSGKT).

This sequence belongs to the ABC transporter superfamily. Fe(3+) ion importer (TC 3.A.1.10) family. In terms of assembly, the complex is composed of two ATP-binding proteins (FbpC), two transmembrane proteins (FbpB) and a solute-binding protein (FbpA).

It localises to the cell inner membrane. The catalysed reaction is Fe(3+)(out) + ATP + H2O = Fe(3+)(in) + ADP + phosphate + H(+). In terms of biological role, part of the ABC transporter complex FbpABC involved in Fe(3+) ions import. Responsible for energy coupling to the transport system. This Pectobacterium atrosepticum (strain SCRI 1043 / ATCC BAA-672) (Erwinia carotovora subsp. atroseptica) protein is Fe(3+) ions import ATP-binding protein FbpC 2.